The sequence spans 157 residues: Arginine repressor (157 aa).

This sequence belongs to the ArgR family.

It is found in the cytoplasm. Its pathway is amino-acid biosynthesis; L-arginine biosynthesis [regulation]. Its function is as follows. Regulates arginine biosynthesis genes. This chain is Arginine repressor, found in Colwellia psychrerythraea (strain 34H / ATCC BAA-681) (Vibrio psychroerythus).